The sequence spans 222 residues: Ras-related protein Rab-41 (222 aa).

7 residues coordinate GTP: S41, V42, G43, K44, T45, S46, and T63. Residue T45 participates in Mg(2+) binding. Residues 58–66 (CACQATVGI) are switch-I. Mg(2+) contacts are provided by T63 and D86. GTP is bound by residues G89, N144, K145, D147, S174, A175, and K176. Positions 89 to 105 (GQERFHSLIPSYIRDST) are switch-II. C222 is lipidated: S-geranylgeranyl cysteine.

Belongs to the small GTPase superfamily. Rab family. Mg(2+) is required as a cofactor. As to expression, widely expressed in brain, testis, lung, heart, ovary, colon, kidney, uterus and spleen but not in liver.

Its subcellular location is the cytoplasm. It carries out the reaction GTP + H2O = GDP + phosphate + H(+). Regulated by guanine nucleotide exchange factors (GEFs) which promote the exchange of bound GDP for free GTP. Regulated by GTPase activating proteins (GAPs) which increase the GTP hydrolysis activity. Inhibited by GDP dissociation inhibitors (GDIs). In terms of biological role, the small GTPases Rab are key regulators of intracellular membrane trafficking, from the formation of transport vesicles to their fusion with membranes. Rabs cycle between an inactive GDP-bound form and an active GTP-bound form that is able to recruit to membranes different sets of downstream effectors directly responsible for vesicle formation, movement, tethering and fusion. RAB41 is required for normal Golgi ribbon organization and ER-to-Golgi trafficking. This is Ras-related protein Rab-41 from Homo sapiens (Human).